Here is a 208-residue protein sequence, read N- to C-terminus: Uracil phosphoribosyltransferase (208 aa).

5-phospho-alpha-D-ribose 1-diphosphate contacts are provided by residues Arg78, Arg103, and 130 to 138 (DPMLATGGS). Uracil contacts are provided by residues Ile193 and 198–200 (GDA). Position 199 (Asp199) interacts with 5-phospho-alpha-D-ribose 1-diphosphate.

The protein belongs to the UPRTase family. The cofactor is Mg(2+).

It catalyses the reaction UMP + diphosphate = 5-phospho-alpha-D-ribose 1-diphosphate + uracil. It functions in the pathway pyrimidine metabolism; UMP biosynthesis via salvage pathway; UMP from uracil: step 1/1. Its activity is regulated as follows. Allosterically activated by GTP. Functionally, catalyzes the conversion of uracil and 5-phospho-alpha-D-ribose 1-diphosphate (PRPP) to UMP and diphosphate. The sequence is that of Uracil phosphoribosyltransferase from Pectobacterium carotovorum subsp. carotovorum (strain PC1).